The following is a 185-amino-acid chain: Ribosome-recycling factor (185 aa).

Belongs to the RRF family.

The protein localises to the cytoplasm. In terms of biological role, responsible for the release of ribosomes from messenger RNA at the termination of protein biosynthesis. May increase the efficiency of translation by recycling ribosomes from one round of translation to another. The polypeptide is Ribosome-recycling factor (Mannheimia succiniciproducens (strain KCTC 0769BP / MBEL55E)).